Consider the following 145-residue polypeptide: Hemoglobin subunit beta (145 aa).

The 145-residue stretch at 1 to 145 (MLTAEEKAAV…VANALAHRYH (145 aa)) folds into the Globin domain. At threonine 11 the chain carries Phosphothreonine. Lysine 58 is subject to N6-acetyllysine. Residue histidine 62 coordinates heme b. Lysine 81 bears the N6-acetyllysine mark. Histidine 91 lines the heme b pocket. Cysteine 92 carries the S-nitrosocysteine modification.

This sequence belongs to the globin family. As to quaternary structure, heterotetramer of two alpha chains and two beta chains. Red blood cells.

Involved in oxygen transport from the lung to the various peripheral tissues. The protein is Hemoglobin subunit beta (HBB) of Ovis aries musimon (Mouflon).